A 623-amino-acid polypeptide reads, in one-letter code: Chaperone protein HtpG (623 aa).

The tract at residues 1 to 336 (MSMKGQETRG…SNDLPLNVSR (336 aa)) is a; substrate-binding. Residues 337 to 551 (EILQDSRVTQ…ADEMSTQMAK (215 aa)) form a b region. The interval 552-623 (LFAAAGQEAP…IRRMNKLLSA (72 aa)) is c.

The protein belongs to the heat shock protein 90 family. In terms of assembly, homodimer.

It is found in the cytoplasm. Molecular chaperone. Has ATPase activity. In Serratia proteamaculans (strain 568), this protein is Chaperone protein HtpG.